Consider the following 629-residue polypeptide: tRNA uridine 5-carboxymethylaminomethyl modification enzyme MnmG (629 aa).

FAD is bound at residue 13–18; sequence GGGHAG. Position 273–287 (273–287) interacts with NAD(+); sequence GPRYCPSIEDKVVRF.

Belongs to the MnmG family. In terms of assembly, homodimer. Heterotetramer of two MnmE and two MnmG subunits. FAD is required as a cofactor.

The protein localises to the cytoplasm. Its function is as follows. NAD-binding protein involved in the addition of a carboxymethylaminomethyl (cmnm) group at the wobble position (U34) of certain tRNAs, forming tRNA-cmnm(5)s(2)U34. The chain is tRNA uridine 5-carboxymethylaminomethyl modification enzyme MnmG from Nitrosococcus oceani (strain ATCC 19707 / BCRC 17464 / JCM 30415 / NCIMB 11848 / C-107).